The sequence spans 424 residues: Serine--tRNA ligase (424 aa).

232 to 234 (TAE) contributes to the L-serine binding site. An ATP-binding site is contributed by 263–265 (RKE). Glutamate 286 contacts L-serine. 350–353 (EISS) is an ATP binding site. L-serine is bound at residue serine 386.

Belongs to the class-II aminoacyl-tRNA synthetase family. Type-1 seryl-tRNA synthetase subfamily. As to quaternary structure, homodimer. The tRNA molecule binds across the dimer.

The protein resides in the cytoplasm. It carries out the reaction tRNA(Ser) + L-serine + ATP = L-seryl-tRNA(Ser) + AMP + diphosphate + H(+). The catalysed reaction is tRNA(Sec) + L-serine + ATP = L-seryl-tRNA(Sec) + AMP + diphosphate + H(+). It participates in aminoacyl-tRNA biosynthesis; selenocysteinyl-tRNA(Sec) biosynthesis; L-seryl-tRNA(Sec) from L-serine and tRNA(Sec): step 1/1. In terms of biological role, catalyzes the attachment of serine to tRNA(Ser). Is also able to aminoacylate tRNA(Sec) with serine, to form the misacylated tRNA L-seryl-tRNA(Sec), which will be further converted into selenocysteinyl-tRNA(Sec). This Thermodesulfovibrio yellowstonii (strain ATCC 51303 / DSM 11347 / YP87) protein is Serine--tRNA ligase.